A 348-amino-acid polypeptide reads, in one-letter code: Dihydroorotase (348 aa).

Zn(2+) is bound by residues His-17 and His-19. Residues 19–21 and Asn-45 contribute to the substrate site; that span reads HLR. The Zn(2+) site is built by Lys-103, His-140, and His-178. An N6-carboxylysine modification is found at Lys-103. Residue His-140 coordinates substrate. Leu-223 lines the substrate pocket. Asp-251 contacts Zn(2+). Residue Asp-251 is part of the active site. The substrate site is built by His-255 and Ala-267.

Belongs to the metallo-dependent hydrolases superfamily. DHOase family. Class II DHOase subfamily. As to quaternary structure, homodimer. The cofactor is Zn(2+).

The enzyme catalyses (S)-dihydroorotate + H2O = N-carbamoyl-L-aspartate + H(+). It functions in the pathway pyrimidine metabolism; UMP biosynthesis via de novo pathway; (S)-dihydroorotate from bicarbonate: step 3/3. Catalyzes the reversible cyclization of carbamoyl aspartate to dihydroorotate. The chain is Dihydroorotase from Serratia proteamaculans (strain 568).